A 1042-amino-acid polypeptide reads, in one-letter code: Serine/threonine-protein kinase LATS2 (1042 aa).

Residues 23 to 44 (REGLKQPSKASTQGLLVGPNSD) are disordered. Residues 30–44 (SKASTQGLLVGPNSD) are compositionally biased toward polar residues. Ser-82 is modified (phosphoserine; by AURKA). The UBA domain maps to 97–138 (EVNRQMLQELVNAGCDQEMAGRALKQTGSRSIEAALEYISKM). The interval 100–140 (RQMLQELVNAGCDQEMAGRALKQTGSRSIEAALEYISKMGY) is interaction with ubiquitinated AMOTL2. The segment at 237–282 (HFPGTHYGRGHLLSEQPGYGVQRSSSFQNKTPPDAYSSMAKAQGGP) is disordered. A compositionally biased stretch (polar residues) spans 258–267 (QRSSSFQNKT). Residue Thr-267 is modified to Phosphothreonine. Ser-362 bears the Phosphoserine mark. Disordered regions lie at residues 378–399 (RAGP…LPAP), 442–481 (PATE…HLLL), and 501–550 (QSLR…KRES). The short motif at 472–475 (PPPY) is the PPxY motif element. Over residues 507–530 (TEQDRSDKSHKGAKGDKAGRDKKQ) the composition is skewed to basic and acidic residues. A Phosphoserine modification is found at Ser-534. Basic and acidic residues predominate over residues 541 to 550 (NSRDEEKRES). The 306-residue stretch at 626-931 (FVKIKTLGIG…ADDLKAHPFF (306 aa)) folds into the Protein kinase domain. Residues 632–640 (LGIGAFGEV) and Lys-655 contribute to the ATP site. Asp-749 functions as the Proton acceptor in the catalytic mechanism. The AGC-kinase C-terminal domain maps to 932–1010 (NTIDFSRDIR…RRFFDDNGYP (79 aa)). Thr-999 bears the Phosphothreonine mark. The interval 1014–1042 (PKPSEPAESADPGDADLEGAAEGCQPVYV) is disordered.

This sequence belongs to the protein kinase superfamily. AGC Ser/Thr protein kinase family. In terms of assembly, interacts with and is phosphorylated by AURKA. Binds to AR. Interacts with AJUBA during mitosis and this complex regulates organization of the spindle apparatus through recruitment of gamma-tubulin to the centrosome. Interacts (via PPxY motif) with YAP1 (via WW domains). Interacts with MOB1A and MOB1B. Interacts with LIMD1, WTIP and AJUBA. Interacts with SNAI1. Interacts with WWC1, WWC2 and WWC3 (via their WW domains). Interacts (via UBA domain) with ubiquitinated AMOTL2; the interaction promotes LATS2 phosphorylation of YAP1. The cofactor is Mg(2+). Post-translationally, autophosphorylated and phosphorylated during M-phase and the G1/S-phase of the cell cycle. Phosphorylated and activated by STK3/MST2. Phosphorylated by MAP4Ks; in parallel to STK3/MST2 and resulting to its activation. Phosphorylation by NUAK2 may regulate its activity in phosphorylation and inactivation YAP1. In terms of tissue distribution, expressed at high levels in ovary and testis and at lower levels in all other tissues examined.

Its subcellular location is the cytoplasm. The protein resides in the cytoskeleton. It is found in the microtubule organizing center. It localises to the centrosome. The protein localises to the spindle pole. Its subcellular location is the nucleus. The catalysed reaction is L-seryl-[protein] + ATP = O-phospho-L-seryl-[protein] + ADP + H(+). It carries out the reaction L-threonyl-[protein] + ATP = O-phospho-L-threonyl-[protein] + ADP + H(+). Negative regulator of YAP1 in the Hippo signaling pathway that plays a pivotal role in organ size control and tumor suppression by restricting proliferation and promoting apoptosis. The core of this pathway is composed of a kinase cascade wherein STK3/MST2 and STK4/MST1, in complex with its regulatory protein SAV1, phosphorylates and activates LATS1/2 in complex with its regulatory protein MOB1, which in turn phosphorylates and inactivates YAP1 oncoprotein and WWTR1/TAZ. Phosphorylation of YAP1 by LATS2 inhibits its translocation into the nucleus to regulate cellular genes important for cell proliferation, cell death, and cell migration. Also phosphorylates YAP1 in response to cell contact inhibition-driven WWP1 ubiquitination of AMOTL2, which results in LATS2 activation. Acts as a tumor suppressor which plays a critical role in centrosome duplication, maintenance of mitotic fidelity and genomic stability. Negatively regulates G1/S transition by down-regulating cyclin E/CDK2 kinase activity. Negative regulator of the androgen receptor. Phosphorylates SNAI1 in the nucleus leading to its nuclear retention and stabilization, which enhances its epithelial-mesenchymal transition and tumor cell invasion/migration activities. This tumor-promoting activity is independent of its effects upon YAP1 or WWTR1/TAZ. Acts as an activator of the NLRP3 inflammasome by mediating phosphorylation of 'Ser-265' of NLRP3 following NLRP3 palmitoylation, promoting NLRP3 activation by NEK7. The protein is Serine/threonine-protein kinase LATS2 of Mus musculus (Mouse).